The sequence spans 372 residues: MTALPQRTLMVMAGGTGGHVFPGLAVAHLMQAWGWKVVWLGNPAGMEATLVPKHGIPMEYVRFGGLRGKGMKTKLMLPVNLLRACTQSLSVLRRVKPDVVLGMGGYITFPAGLMTALSGRPLVLHEQNSIAGLANKVLAKVAKRVLVAFPNALPHGEWTGNPIREELARAIAPKARYAQRSGPLNVLVVGGSLGAAALNEVVPRAVALLAPNERPRIVHQAGAKHIEALRENYSAAGLQAGADVELVPFIDDMTSAYANADLVICRSGAMTVSEISAVGVAAFFVPFPYAVDDHQTTNAAFLADNGAALVVQQRDLSAETLADWLRSQTRETLAEMAERSRSLAKPDATEQVAQICATVAGSISGASPEGKQ.

UDP-N-acetyl-alpha-D-glucosamine is bound by residues 16 to 18 (TGG), Asn-128, Arg-164, Ser-192, Ile-250, and Gln-295.

It belongs to the glycosyltransferase 28 family. MurG subfamily.

It is found in the cell inner membrane. The catalysed reaction is di-trans,octa-cis-undecaprenyl diphospho-N-acetyl-alpha-D-muramoyl-L-alanyl-D-glutamyl-meso-2,6-diaminopimeloyl-D-alanyl-D-alanine + UDP-N-acetyl-alpha-D-glucosamine = di-trans,octa-cis-undecaprenyl diphospho-[N-acetyl-alpha-D-glucosaminyl-(1-&gt;4)]-N-acetyl-alpha-D-muramoyl-L-alanyl-D-glutamyl-meso-2,6-diaminopimeloyl-D-alanyl-D-alanine + UDP + H(+). The protein operates within cell wall biogenesis; peptidoglycan biosynthesis. Cell wall formation. Catalyzes the transfer of a GlcNAc subunit on undecaprenyl-pyrophosphoryl-MurNAc-pentapeptide (lipid intermediate I) to form undecaprenyl-pyrophosphoryl-MurNAc-(pentapeptide)GlcNAc (lipid intermediate II). This is UDP-N-acetylglucosamine--N-acetylmuramyl-(pentapeptide) pyrophosphoryl-undecaprenol N-acetylglucosamine transferase from Paraburkholderia phytofirmans (strain DSM 17436 / LMG 22146 / PsJN) (Burkholderia phytofirmans).